The chain runs to 249 residues: Tabinhibitin 4 (249 aa).

Residues 1–23 (MTLNVYFVLLSPYSLQSVPLPLT) form the signal peptide. The Cell attachment site signature appears at 31-33 (RGD). The SCP domain maps to 64 to 207 (LQKTNWLRGV…LKRALFTCNF (144 aa)). Residues 220-222 (RGD) carry the Cell attachment site motif.

The protein belongs to the CRISP family. In terms of tissue distribution, expressed in salivary glands.

It localises to the secreted. Functionally, inhibits platelet aggregation induced by all agonists tested (ADP, arachidonic acid, the thromboxane A2 analog U46619, thrombin, and snake venom snaclecs (TMVA that activates platelet through GPIB, and stejnulxin that specifically acts through GPVI (GP6))). May act by competing with fibrinogen for binding to glycoprotein IIb/IIIa (ITGA2B/ITGB3). The protein is Tabinhibitin 4 of Tabanus yao (Horsefly).